The sequence spans 221 residues: Endo-1,4-beta-xylanase I (221 aa).

An N-terminal signal peptide occupies residues 1–30 (MVSFTSIITAAVAATGALAAPATDVSLVAR). In terms of domain architecture, GH11 spans 31-219 (QNTPNGEGTH…STGNAQITVN (189 aa)). The active-site Nucleophile is the Glu-115. The segment at 126–157 (DPSSQSQNKGTVTSDGSSYKIAQSTRTNQPSI) is disordered. Glu-206 acts as the Proton donor in catalysis.

Belongs to the glycosyl hydrolase 11 (cellulase G) family. Post-translationally, the N-terminus is blocked.

The protein localises to the secreted. It carries out the reaction Endohydrolysis of (1-&gt;4)-beta-D-xylosidic linkages in xylans.. It functions in the pathway glycan degradation; xylan degradation. In terms of biological role, major xylan-degrading enzyme. Contributes to the hydrolysis of arabinoxylan, the major component of maize cell-walls. The polypeptide is Endo-1,4-beta-xylanase I (XYL1) (Cochliobolus carbonum (Maize leaf spot fungus)).